The sequence spans 484 residues: Muscarinic acetylcholine receptor M4 (484 aa).

Residues 1-32 (MENDTWENESSASNHSIDETIVEIPGKYQTME) are Extracellular-facing. N-linked (GlcNAc...) asparagine glycosylation is found at asparagine 3, asparagine 8, and asparagine 14. Residues 33–55 (MIFIATVTGSLSLVTVVGNILVM) form a helical membrane-spanning segment. The Cytoplasmic portion of the chain corresponds to 56–69 (LSIKVNRQLQTVNN). A helical transmembrane segment spans residues 70–90 (YFLFSLACADLIIGVFSMNLY). Residues 91-107 (SLYIIKGYWPLGPIVCD) lie on the Extracellular side of the membrane. Cysteines 106 and 186 form a disulfide. The helical transmembrane segment at 108 to 129 (LWLALDYVVSNASVMNLLIISL) threads the bilayer. Over 130 to 149 (ERXFCVTKPLTYPARRTTKM) the chain is Cytoplasmic. A helical membrane pass occupies residues 150–172 (AGLMIAAAWLLSFELWAPAILFW). Topologically, residues 173 to 194 (QFIVGQRTVPSGECYIQFLSNP) are extracellular. A helical membrane pass occupies residues 195-217 (AVTFGTAIAAFYLPVVIMTILYI). At 218–406 (HISLASRSRV…AAREKKVTRT (189 aa)) the chain is on the cytoplasmic side. The tract at residues 255 to 316 (NIPKQDAGDK…EKQPLSEASS (62 aa)) is disordered. Over residues 260 to 270 (DAGDKVVEKKN) the composition is skewed to basic and acidic residues. A helical transmembrane segment spans residues 407–427 (IFAILLAFIITWTPYNVMVLI). Topologically, residues 428–441 (NTFCQTCIPETIWY) are extracellular. The chain crosses the membrane as a helical span at residues 442–461 (IGYWLCYVNSTINPACYALC). The Cytoplasmic segment spans residues 462-484 (NATFKKTFKHLLMCQYKSIGTAR).

Belongs to the G-protein coupled receptor 1 family. Muscarinic acetylcholine receptor subfamily. CHRM4 sub-subfamily.

The protein localises to the cell membrane. It localises to the postsynaptic cell membrane. The muscarinic acetylcholine receptor mediates various cellular responses, including inhibition of adenylate cyclase, breakdown of phosphoinositides and modulation of potassium channels through the action of G proteins. Primary transducing effect is inhibition of adenylate cyclase. The sequence is that of Muscarinic acetylcholine receptor M4 (chrm4) from Xenopus laevis (African clawed frog).